Reading from the N-terminus, the 488-residue chain is Alkaline nuclease (488 aa).

The protein belongs to the herpesviridae alkaline nuclease family. As to quaternary structure, interacts with major DNA-binding protein; this interaction increases the nuclease processivity of the alkaline exonuclease.

The protein resides in the host nucleus. The protein localises to the host cytoplasm. Its function is as follows. Plays a role in processing non linear or branched viral DNA intermediates in order to promote the production of mature packaged unit-length linear progeny viral DNA molecules. Exhibits endonuclease and exonuclease activities and accepts both double-stranded and single-stranded DNA as substrate. Exonuclease digestion of DNA is in the 5'-&gt; 3' direction and the products are 5'-monophosphate nucleosides. Additionally, forms a recombinase with the major DNA-binding protein, which displays strand exchange activity. This chain is Alkaline nuclease (U70), found in Homo sapiens (Human).